The primary structure comprises 139 residues: Mitochondrial intermembrane space import and assembly protein 40-A (139 aa).

Intrachain disulfides connect C53–C55, C64–C97, and C74–C87. Positions 61–105 (SGPCGEQFKSAFSCFHYSQEEIKGSDCLDQFRGMQECMQKYPDLY) constitute a CHCH domain. Short sequence motifs (cx9C motif) lie at residues 64–74 (CGEQFKSAFSC) and 87–97 (CLDQFRGMQEC). The segment at 103 to 139 (DLYPQEDDEEEAEKEKQNKEAEPSVTQSSDTKEESSS) is disordered. Residues 115–124 (EKEKQNKEAE) are compositionally biased toward basic and acidic residues.

As to quaternary structure, monomer. Can form homooligomers.

It is found in the mitochondrion intermembrane space. Central component of a redox-sensitive mitochondrial intermembrane space import machinery which is required for the biogenesis of respiratory chain complexes. Functions as chaperone and catalyzes the formation of disulfide bonds in substrate proteins, such as COX17 or MICU1. Required for the import and folding of small cysteine-containing proteins (small Tim) in the mitochondrial intermembrane space (IMS). Precursor proteins to be imported into the IMS are translocated in their reduced form into the mitochondria. The protein is Mitochondrial intermembrane space import and assembly protein 40-A (chchd4-a) of Xenopus laevis (African clawed frog).